The sequence spans 574 residues: UvrABC system protein C (574 aa).

The region spanning 12–92 (KKPGVYIFKN…IYIHKPKYNI (81 aa)) is the GIY-YIG domain. Positions 200–235 (EEVKNYLQKAMMDYAKIKNYEKAAQMRDTLFKLENL) constitute a UVR domain.

This sequence belongs to the UvrC family. In terms of assembly, interacts with UvrB in an incision complex.

The protein localises to the cytoplasm. In terms of biological role, the UvrABC repair system catalyzes the recognition and processing of DNA lesions. UvrC both incises the 5' and 3' sides of the lesion. The N-terminal half is responsible for the 3' incision and the C-terminal half is responsible for the 5' incision. The sequence is that of UvrABC system protein C from Petrotoga mobilis (strain DSM 10674 / SJ95).